Reading from the N-terminus, the 233-residue chain is CDP-diacylglycerol--glycerol-3-phosphate 3-phosphatidyltransferase 2 (233 aa).

The disordered stretch occupies residues Met1–Arg23. The next 5 helical transmembrane spans lie at Val40–Ala60, Thr71–Ala91, Phe100–Leu120, Met125–Ile145, and Leu201–Val221.

This sequence belongs to the CDP-alcohol phosphatidyltransferase class-I family. It depends on Mn(2+) as a cofactor.

Its subcellular location is the microsome membrane. The protein localises to the endoplasmic reticulum membrane. It carries out the reaction a CDP-1,2-diacyl-sn-glycerol + sn-glycerol 3-phosphate = a 1,2-diacyl-sn-glycero-3-phospho-(1'-sn-glycero-3'-phosphate) + CMP + H(+). It participates in phospholipid metabolism; phosphatidylglycerol biosynthesis; phosphatidylglycerol from CDP-diacylglycerol: step 1/2. Its function is as follows. Catalyzes the committed step to the synthesis of the acidic phospholipids, including phosphatidylglycerol (PG). Together with PGPS1, required for the proper embryo development by providing PG accurate levels. This Arabidopsis thaliana (Mouse-ear cress) protein is CDP-diacylglycerol--glycerol-3-phosphate 3-phosphatidyltransferase 2.